The primary structure comprises 590 residues: CTP synthase (590 aa).

The tract at residues 1-278 (MRKHPQSATK…DAFVVRRLNL (278 aa)) is amidoligase domain. Ser20 serves as a coordination point for CTP. Ser20 provides a ligand contact to UTP. ATP contacts are provided by residues 21 to 26 (SLGKGL) and Asp78. Residues Asp78 and Glu152 each contribute to the Mg(2+) site. Residues 159–161 (DIE), 199–204 (KTKPTQ), and Lys235 contribute to the CTP site. UTP contacts are provided by residues 199-204 (KTKPTQ) and Lys235. The Glutamine amidotransferase type-1 domain maps to 303-551 (RIALVGKYVD…VGAAIDYKSA (249 aa)). Position 366 (Gly366) interacts with L-glutamine. The Nucleophile; for glutamine hydrolysis role is filled by Cys393. L-glutamine contacts are provided by residues 394 to 397 (LGLQ), Glu416, and Arg477. Active-site residues include His524 and Glu526. The segment at 566-590 (EHLPNSSNQHRDGVERSFPAPAARG) is disordered.

The protein belongs to the CTP synthase family. Homotetramer.

The catalysed reaction is UTP + L-glutamine + ATP + H2O = CTP + L-glutamate + ADP + phosphate + 2 H(+). It carries out the reaction L-glutamine + H2O = L-glutamate + NH4(+). The enzyme catalyses UTP + NH4(+) + ATP = CTP + ADP + phosphate + 2 H(+). Its pathway is pyrimidine metabolism; CTP biosynthesis via de novo pathway; CTP from UDP: step 2/2. With respect to regulation, allosterically activated by GTP, when glutamine is the substrate; GTP has no effect on the reaction when ammonia is the substrate. The allosteric effector GTP functions by stabilizing the protein conformation that binds the tetrahedral intermediate(s) formed during glutamine hydrolysis. Inhibited by the product CTP, via allosteric rather than competitive inhibition. Its function is as follows. Catalyzes the ATP-dependent amination of UTP to CTP with either L-glutamine or ammonia as the source of nitrogen. Regulates intracellular CTP levels through interactions with the four ribonucleotide triphosphates. This chain is CTP synthase, found in Mycobacterium leprae (strain Br4923).